The primary structure comprises 136 residues: Orexigenic neuropeptide QRFP (136 aa).

The N-terminal stretch at 1-18 (MVRPYPLIYFLFLPLGAC) is a signal peptide. Positions 19–90 (FPLLDRREPT…HAGCRFRFGR (72 aa)) are excised as a propeptide. A Pyrrolidone carboxylic acid modification is found at Gln91. Position 133 is a phenylalanine amide (Phe133).

Belongs to the RFamide neuropeptide family. As to quaternary structure, ligand for the G-protein coupled receptor QRFPR/GPR103. In terms of tissue distribution, expressed widely in the brain with highest expression levels in the cerebellum, medulla, pituitary, retina, vestibular nucleus, and white matter. Also expressed in the bladder, colon, coronary artery, parathyroid gland, prostate, testis, and thyroid.

The protein resides in the secreted. Stimulates feeding behavior, metabolic rate and locomotor activity and increases blood pressure. May have orexigenic activity. May promote aldosterone secretion by the adrenal gland. In Homo sapiens (Human), this protein is Orexigenic neuropeptide QRFP.